The primary structure comprises 37 residues: GCIPYGKTCEFWSGPWCCAGKCKLNVWSMTLSCTRNF.

Intrachain disulfides connect Cys2/Cys18, Cys9/Cys22, and Cys17/Cys33. Phenylalanine amide is present on Phe37.

It belongs to the neurotoxin 01 (U2-agtx) family. In terms of processing, contains 3 disulfide bonds. As to expression, expressed by the venom gland.

It is found in the secreted. Functionally, blocks the Nav1.2/SCN2A, Nav1.4/SCN4A, and Nav1.6/SCN8A sodium channels. Reduces the peak amplitude of the sodium current and negatively shifts the steady-state inactivation process. Does not shift the threshold potential of activation or the voltage corresponding to maximal current. Does not change the reversal potential of the sodium current. May act on site 1 of the receptor. This is Mu-thomitoxin-Hme1a from Heriaeus mellotteei (Crab spider).